The primary structure comprises 419 residues: CinA-like protein (419 aa).

The protein belongs to the CinA family.

This chain is CinA-like protein, found in Acaryochloris marina (strain MBIC 11017).